The following is a 261-amino-acid chain: Indole-3-glycerol phosphate synthase (261 aa).

Belongs to the TrpC family.

It catalyses the reaction 1-(2-carboxyphenylamino)-1-deoxy-D-ribulose 5-phosphate + H(+) = (1S,2R)-1-C-(indol-3-yl)glycerol 3-phosphate + CO2 + H2O. It functions in the pathway amino-acid biosynthesis; L-tryptophan biosynthesis; L-tryptophan from chorismate: step 4/5. The polypeptide is Indole-3-glycerol phosphate synthase (Burkholderia multivorans (strain ATCC 17616 / 249)).